Consider the following 671-residue polypeptide: TOM1-like protein 6 (671 aa).

Alanine 2 bears the N-acetylalanine mark. In terms of domain architecture, VHS spans 15–144; sequence ATSDLLLGPD…ELRRSGVEFP (130 aa). Serine 147 bears the Phosphoserine mark. Residues 229–317 enclose the GAT domain; the sequence is EVEGLSLSSI…LLAKHDAIAS (89 aa). 2 disordered regions span residues 320 to 620 and 636 to 671; these read PLPV…VGQK and GSAD…RKMI. Low complexity predominate over residues 334 to 362; sequence ASKPADSSPKSSEAKDSSSIAGSSSPIPA. Positions 372 to 382 are enriched in acidic residues; it reads DEEYEEEEDEF. Over residues 395–405 the composition is skewed to polar residues; sequence SVTTDPTSLES. The span at 407 to 417 shows a compositional bias: low complexity; sequence NAASNALALAL. Residues 444–459 are compositionally biased toward pro residues; it reads STPPAPSSQPSPPPPA. Residues 483–554 show a composition bias toward low complexity; the sequence is AQQQQPQQPQ…QPSTRPQNPY (72 aa). 2 stretches are compositionally biased toward polar residues: residues 562–598 and 605–616; these read ASTS…NSFP and QATSTASNSGVS. Phosphoserine is present on serine 596. A compositionally biased stretch (low complexity) spans 647 to 663; the sequence is NSSNGSQNLSGSQTQQS.

It belongs to the TOM1 family. As to expression, ubiquitously expressed.

Its subcellular location is the endosome. It is found in the multivesicular body. The protein resides in the cytoplasm. The protein localises to the early endosome membrane. Its function is as follows. Acts as a gatekeeper for degradative protein sorting to the vacuole. Plays a role in recognition of ubiquitinated PIN2 auxin carrier at the plasma membrane and further to its endocytic sorting. Binds ubiquitin in vitro. Might contribute to the loading of the ESCRT machinery. The polypeptide is TOM1-like protein 6 (Arabidopsis thaliana (Mouse-ear cress)).